A 178-amino-acid chain; its full sequence is Fatty-acid and retinol-binding protein 1 (178 aa).

A signal peptide spans 1–16 (MYHRLILLALVGTTMA). Coiled-coil stretches lie at residues 67 to 89 (DAAL…ELRN) and 130 to 153 (KQAA…ELKV).

The protein belongs to the fatty-acid and retinol-binding protein (FARBP) family. In terms of processing, not glycosylated.

Its subcellular location is the secreted. Binds retinol. Also binds the fluorescent fatty acid 11-((5-dimethylaminonaphthalene-1-sulfonyl)amino)undecanoic acid (DAUDA). The long chain fatty acid oleic acid can act competitively to displace bound DAUDA and retinol. The sequence is that of Fatty-acid and retinol-binding protein 1 from Brugia malayi (Filarial nematode worm).